A 291-amino-acid polypeptide reads, in one-letter code: Homeobox protein SIX2 (291 aa).

Positions 124-183 form a DNA-binding region, homeobox; that stretch reads GEETSYCFKEKSRSVLREWYAHNPYPSPREKRELAEATGLTTTQVSNWFKNRRQRDRAAE. Residues 168 to 279 are disordered; sequence VSNWFKNRRQ…HHHGLQDSIL (112 aa). The span at 179–190 shows a compositional bias: basic and acidic residues; that stretch reads DRAAEAKERENN. Over residues 224 to 233 the composition is skewed to low complexity; it reads HSSSSPALLL. The segment covering 249 to 259 has biased composition (pro residues); it reads PPGPSAVPVPV.

It belongs to the SIX/Sine oculis homeobox family. As to quaternary structure, interacts with TCF7L2; in a canonical Wnt signaling independent manner; prevents transcription of differentiation genes in cap mesenchyme. Interacts with OSR1; form a strong repressor complex with TCF7L2, TLE2 and TLE3 to prevent the activation of Wnt/beta-catenin target genes in the cap mesenchyme. Interacts with HOXA11, EYA1 and EYA3. As to expression, strongly expressed in skeletal muscle. Expressed in Wilms' tumor and in the cap mesenchyme of fetal kidney (at protein level).

It is found in the nucleus. Functionally, transcription factor that plays an important role in the development of several organs, including kidney, skull and stomach. During kidney development, maintains cap mesenchyme multipotent nephron progenitor cells in an undifferentiated state by opposing the inductive signals emanating from the ureteric bud and cooperates with WNT9B to promote renewing progenitor cells proliferation. Acts through its interaction with TCF7L2 and OSR1 in a canonical Wnt signaling independent manner preventing transcription of differentiation genes in cap mesenchyme such as WNT4. Also acts independently of OSR1 to activate expression of many cap mesenchyme genes, including itself, GDNF and OSR1. During craniofacial development plays a role in growth and elongation of the cranial base through regulation of chondrocyte differentiation. During stomach organogenesis, controls pyloric sphincter formation and mucosal growth through regulation of a gene network including NKX2-5, BMPR1B, BMP4, SOX9 and GREM1. During branchial arch development, acts to mediate HOXA2 control over the insulin-like growth factor pathway. May also be involved in limb tendon and ligament development. Plays a role in cell proliferation and migration. The sequence is that of Homeobox protein SIX2 (SIX2) from Homo sapiens (Human).